A 187-amino-acid polypeptide reads, in one-letter code: Transcriptional regulator VspR (187 aa).

In terms of biological role, represses the transcription of several genes encoded within the Vibrio 7th pandemic island-1 (VSP-1), including dncV, VC_0176, VC_0178 and VC_0180. This is Transcriptional regulator VspR (vspR) from Vibrio cholerae serotype O1 (strain ATCC 39315 / El Tor Inaba N16961).